A 242-amino-acid chain; its full sequence is Probable transcriptional regulatory protein Cthe_2075 (242 aa).

The protein belongs to the TACO1 family.

It is found in the cytoplasm. The polypeptide is Probable transcriptional regulatory protein Cthe_2075 (Acetivibrio thermocellus (strain ATCC 27405 / DSM 1237 / JCM 9322 / NBRC 103400 / NCIMB 10682 / NRRL B-4536 / VPI 7372) (Clostridium thermocellum)).